A 300-amino-acid chain; its full sequence is MENTKTNASSSGMSSSSSFSVSYAEEMLLADEVSKINSMSILGPNQLKLCTQLVLSNGAAPVVLSLVSKEKKSILNRMLPKIGQRMYVHHSAIYLLYMPNILKSSSGSITLKLFNEATGELVDVDTDHDATQACIFAGRYPRSILAKDAAKGHDLKLVVHAVASTNANSAVGVLYPIWEDELSRKQILERGADFLKFPIAETEPVRDLLNAGKLTDFVLDRTRLGVGSKNDPSPVLLEPRAKITGKAKTVFIPEGPSVPNTTINGMAPTVRIDAGSPKGLGVPKGFTYESFIKDEILPDH.

Belongs to the alfamovirus movement protein family.

The protein resides in the host cell junction. It is found in the host plasmodesma. In terms of biological role, transports viral genome to neighboring plant cells directly through plasmosdesmata, without any budding. The movement protein allows efficient cell to cell propagation, by bypassing the host cell wall barrier. Acts by forming a tubular structure at the host plasmodesmata, enlarging it enough to allow free passage of virion capsids. The chain is Movement protein from Alfalfa mosaic virus (AMV).